The following is a 464-amino-acid chain: 3-isopropylmalate dehydratase large subunit (464 aa).

Residues Cys-345, Cys-405, and Cys-408 each contribute to the [4Fe-4S] cluster site.

It belongs to the aconitase/IPM isomerase family. LeuC type 1 subfamily. As to quaternary structure, heterodimer of LeuC and LeuD. [4Fe-4S] cluster is required as a cofactor.

The catalysed reaction is (2R,3S)-3-isopropylmalate = (2S)-2-isopropylmalate. The protein operates within amino-acid biosynthesis; L-leucine biosynthesis; L-leucine from 3-methyl-2-oxobutanoate: step 2/4. In terms of biological role, catalyzes the isomerization between 2-isopropylmalate and 3-isopropylmalate, via the formation of 2-isopropylmaleate. The sequence is that of 3-isopropylmalate dehydratase large subunit from Flavobacterium johnsoniae (strain ATCC 17061 / DSM 2064 / JCM 8514 / BCRC 14874 / CCUG 350202 / NBRC 14942 / NCIMB 11054 / UW101) (Cytophaga johnsonae).